Consider the following 1484-residue polypeptide: MIERGKFRSLTLVNWNGFFARTFDLDALVTTLSGGNGAGKSTTMAAFITALIPDLTLLHFRNTTEAGATSGSRDKGLHGKLRAGVCYSALEVVNSRHQRVLVGVRLQQIAGRDRKVDIKPFMIQGLPVKVTPTEILTMTMGDRQARVLPLQELKERVEAIEGVLFKQFNSITDYHSLMFDLGVVPRRLRSSADRSKYYRLIEASLYGGISSAITRSLRDYLLPENSGVRKAFQDMEAALRENRLTLEAIRVTQSDRDLFKHLISEATAYVAADYMRHANERRLHLDDALTLRRDVFGSRKQLASEQYRHVDMARELAEISGGESDLETDYQAASDHLNLVQTAMRQQEKIGRYQEDLEELAFRLEEQNEVVAQSAEQQQENEARLEAAELEVDELKSQLADYQQALDVQQTRAIQFQQALQALDRARELCSLPAMTWEDAAPTLAIYKEREQEATERLLGFEQKLNIAEAASSRFEQAYGLVVKIAGQVSRSDAWQTARELIRDAASQRHQAERLQALRSQLNELEQRLREQQDAERLLQEFCQRMGQDYPPEELDVVQQELEARVETLSATVSEAGERRLALRQTLEQVTARIEQLTARALAWLAAQDALTALSEQSGEALTSSRQVTDTMQLLLERERETTVERDEVAGRKRCIEAQIERLSQPGGTDDARLTTLAERFGGVLLSEIYDDVTLDNAPYFSALYGPSHHAIVVPDLSRVREQLDGLEDCPDDLYLIEGDPQSFDDNVFGVEELEGAVLVKVADRQWRYSRFPAVPLFGRAARESRLENLSAERDVLAERYATLSFDVQKIQRQHQAFSRFIGAHLAVAFEPDPEAEMRTLNGRRGELERELSDHHGQNQQSRQHYDQAREGLQLLNRLIPRLGVLLDDTLQDRLETVQADWHDAQEAARYLSQHQKALDQLEPLVAVLQSDPEQHEQLRADYEQAQQTQRQVRQQAFALTEVVQRRTHFSYSDSAGMLSENTDLNDKLRQRLERAEAERSQARDALHAHQAQLTQFSQVQASLKSSYDAKQDMLKELMQELHDIGVQVDANAEARARERRDQLHMALSQNRGRRNQLEKQLTFCEAEMDALQKKLRKLERDYYQTREQVVSAKAGWCSVLRLVKENGVERRLHRRELAYMEAEDLRSMSDKALGALRLAVADNEHLRDVLRLSEDLKRPERKIQFFIAVYQHLRERIRQDIIRTDDPVEAIEQMEIELNRLTEELTAREQKLAISSKSVANIIRKTIQREQNRIRMLNQGLQAVSFGQVKSVRLNVSVREAHATLLDVLSEQQEQHQDLFSSQRLTFSEALAKLYQRLNPQIDLRQRTPQTVGEELLDYRNYLEIEVEVNRGADGWLRAESGALSTGEAIGTGMSILVIVVQSWEEESSRLRGKDISPCRLLFLDEAARLDAKSIATLFELCDRLQMQLIIAAPENISPEKGTTYKLVRKVFNNQEHVHVVGLLGFGTEQAAPPSTALTETDS.

34-41 (GGNGAGKS) serves as a coordination point for ATP. Coiled-coil stretches lie at residues 338-415 (NLVQ…RAIQ), 496-604 (QTAR…ALAW), 781-805 (AARE…ATLS), 835-868 (EAEM…HYDQ), 903-1115 (HDAQ…SAKA), and 1206-1265 (DDPV…LQAV). The segment at 666-783 (PGGTDDARLT…AVPLFGRAAR (118 aa)) is flexible hinge.

Belongs to the SMC family. MukB subfamily. Homodimerization via its hinge domain. Binds to DNA via its C-terminal region. Interacts, and probably forms a ternary complex, with MukE and MukF via its C-terminal region. The complex formation is stimulated by calcium or magnesium. Interacts with tubulin-related protein FtsZ.

It is found in the cytoplasm. It localises to the nucleoid. In terms of biological role, plays a central role in chromosome condensation, segregation and cell cycle progression. Functions as a homodimer, which is essential for chromosome partition. Involved in negative DNA supercoiling in vivo, and by this means organize and compact chromosomes. May achieve or facilitate chromosome segregation by condensation DNA from both sides of a centrally located replisome during cell division. This is Chromosome partition protein MukB from Sodalis glossinidius (strain morsitans).